We begin with the raw amino-acid sequence, 462 residues long: Histidine--tRNA ligase (462 aa).

The protein belongs to the class-II aminoacyl-tRNA synthetase family. In terms of assembly, homodimer.

It localises to the cytoplasm. It carries out the reaction tRNA(His) + L-histidine + ATP = L-histidyl-tRNA(His) + AMP + diphosphate + H(+). This is Histidine--tRNA ligase from Trichormus variabilis (strain ATCC 29413 / PCC 7937) (Anabaena variabilis).